The chain runs to 815 residues: Tubulin polyglutamylase TTLL13 (815 aa).

The TTL domain maps to Arg-85–Glu-430. ATP-binding positions include Lys-202, Gln-208–Gly-209, Gln-230–Ile-233, and Lys-243–Asp-245. An a protein-binding site is contributed by Gln-208. Arg-269 serves as a coordination point for L-glutamate. Thr-291–Asn-292 provides a ligand contact to ATP. Tyr-293 and Lys-311 together coordinate L-glutamate. Asp-376, Glu-389, and Asn-391 together coordinate Mg(2+). The segment at Cys-401–Gly-482 is c-MTBD region. Position 407 (Lys-407) interacts with L-glutamate. Positions Ala-504–Thr-528 form a coiled coil. Positions Arg-520–Gln-556 are disordered. The segment covering Ala-536 to Arg-550 has biased composition (basic and acidic residues).

Belongs to the tubulin--tyrosine ligase family. It depends on Mg(2+) as a cofactor.

It catalyses the reaction (L-glutamyl)(n)-gamma-L-glutamyl-L-glutamyl-[protein] + L-glutamate + ATP = (L-glutamyl)(n+1)-gamma-L-glutamyl-L-glutamyl-[protein] + ADP + phosphate + H(+). Polyglutamylase which modifies tubulin, generating polyglutamate side chains of variable lengths on the gamma-carboxyl group of specific glutamate residues within the C-terminal tail of tubulin. Mediates ATP-dependent polyglutamate side-chain elongation of the polyglutamylation reaction but not the initiation step. Preferentially modifies the alpha-tubulin tail over a beta-tail. The sequence is that of Tubulin polyglutamylase TTLL13 from Homo sapiens (Human).